A 103-amino-acid chain; its full sequence is Small ribosomal subunit protein uS14c (103 aa).

The segment at 27–56 (SKKKIRSKVSPLSLSEKTKMQEKLQSLPRN) is disordered.

It belongs to the universal ribosomal protein uS14 family. In terms of assembly, part of the 30S ribosomal subunit.

The protein localises to the plastid. Its subcellular location is the chloroplast. Binds 16S rRNA, required for the assembly of 30S particles. The polypeptide is Small ribosomal subunit protein uS14c (Zea mays (Maize)).